A 1479-amino-acid chain; its full sequence is Tyrosine-protein kinase BAZ1B (1479 aa).

Residues 20–126 (EPLFTIPHTQ…GEECDFEVGK (107 aa)) form the WAC domain. The tract at residues 146–212 (EAVEKKSDGA…TSLKKGERKW (67 aa)) is disordered. Composition is skewed to basic and acidic residues over residues 148 to 165 (VEKK…DKEN) and 173 to 195 (LQKK…DRAR). 3 positions are modified to phosphoserine: Ser-152, Ser-158, and Ser-161. The short motif at 207–213 (KGERKWA) is the C motif element. Thr-266 is modified (phosphothreonine). The segment at 302–333 (NPSTKRRNTGSPDRKPSKKPKRDSSSLSSPLN) is disordered. 5 positions are modified to phosphoserine: Ser-325, Ser-330, Ser-345, Ser-361, and Ser-374. Disordered stretches follow at residues 376 to 433 (NNNK…KTPK) and 448 to 472 (TQKM…HKHL). Basic residues predominate over residues 381–396 (HSFHIPKKGPAAKKPG). The span at 415 to 425 (GQKSTGNSKSP) shows a compositional bias: polar residues. Residues 454–465 (TPRSSGGVPRSS) show a composition bias toward low complexity. A coiled-coil region spans residues 537 to 587 (ASMSEEQRKEYLKKKRQELKERLREKAKERREREMLERLEKQKRFEDQELG). A DDT domain is found at 605 to 669 (NTLFGDVALV…LQTLLQDEIA (65 aa)). Residues Ser-706, Ser-709, and Ser-717 each carry the phosphoserine modification. Residues 774-809 (SAELWKERLAVLKEENDKKRAEKQKRKEMEARNKEN) adopt a coiled-coil conformation. A disordered region spans residues 789 to 813 (NDKKRAEKQKRKEMEARNKENGKEE). A Glycyl lysine isopeptide (Lys-Gly) (interchain with G-Cter in SUMO1); alternate cross-link involves residue Lys-827. A Glycyl lysine isopeptide (Lys-Gly) (interchain with G-Cter in SUMO2); alternate cross-link involves residue Lys-827. Residues Lys-854, Lys-1043, Lys-1089, and Lys-1107 each participate in a glycyl lysine isopeptide (Lys-Gly) (interchain with G-Cter in SUMO2) cross-link. A coiled-coil region spans residues 854 to 890 (KRKREIQERETKVRLEREAEEERMRKHKAAAEKAFQE). The PHD-type zinc finger occupies 1184–1234 (NARCKVCRKKGEDDKLILCDECNKAFHLFCLRPALYEVPDGEWQCPACQPP). The tract at residues 1231–1324 (CQPPTARRNS…SRPKDDPEVD (94 aa)) is disordered. The span at 1254–1277 (SEGDESGEEEEEEEEEEEEEEDYE) shows a compositional bias: acidic residues. Residues 1257–1284 (DESGEEEEEEEEEEEEEEDYEVAGLRLR) adopt a coiled-coil conformation. Over residues 1305 to 1316 (PGKKSHPARRSR) the composition is skewed to basic residues. Phosphoserine is present on Ser-1315. Position 1331 is an N6-acetyllysine (Lys-1331). One can recognise a Bromo domain in the interval 1335–1439 (RRQSLELQKC…QCLLALLQKH (105 aa)). Phosphoserine occurs at positions 1338, 1464, 1466, and 1468. Positions 1451–1479 (RKFPDRLADDEGDSDSESVGQSRGRRQKK) are disordered.

It belongs to the WAL family. BAZ1B subfamily. Component of the WICH-1 ISWI chromatin remodeling complex, at least composed of SMARCA1 and BAZ1B/WSTF, which regulates the spacing of histone octamers on the DNA template to facilitate access to DNA. Within the WICH-1 ISWI chromatin remodeling complex interacts with SMARCA1; the interaction is direct. Component of the WICH-5 ISWI chromatin remodeling complex (also called the WICH complex), at least composed of SMARCA5/SNF2H and BAZ1B/WSTF, which regulates the spacing of histone octamers on the DNA template to facilitate access to DNA. Within the WICH-5 ISWI chromatin remodeling complex interacts with SMARCA5/SNF2H; the interaction is direct. Component of the B-WICH chromatin remodeling complex, at least composed of SMARCA5/SNF2H, BAZ1B/WSTF, SF3B1, DEK, MYO1C, ERCC6, MYBBP1A and DDX21. Within the B-WICH chromatin remodeling complex, interacts with SMARCA5/SNF2H, DDX21, DEK, MYBBP1A, SF3B1 and ERCC6. Interacts with MYO1C. Interacts with PCNA; the interaction is direct and is required for BAZ1B/WSTF binding to replication foci during S phase. Interacts with CDT1. Mn(2+) serves as cofactor.

It localises to the nucleus. It carries out the reaction L-tyrosyl-[protein] + ATP = O-phospho-L-tyrosyl-[protein] + ADP + H(+). Atypical tyrosine-protein kinase that plays a central role in chromatin remodeling and acts as a transcription regulator. Involved in DNA damage response by phosphorylating 'Tyr-142' of histone H2AX (H2AXY142ph). H2AXY142ph plays a central role in DNA repair and acts as a mark that distinguishes between apoptotic and repair responses to genotoxic stress. Regulatory subunit of the ATP-dependent WICH-1 and WICH-5 ISWI chromatin remodeling complexes, which form ordered nucleosome arrays on chromatin and facilitate access to DNA during DNA-templated processes such as DNA replication, transcription, and repair. Both complexes regulate the spacing of nucleosomes along the chromatin and have the ability to slide mononucleosomes to the center of a DNA template. The WICH-1 ISWI chromatin remodeling complex has a lower ATP hydrolysis rate than the WICH-5 ISWI chromatin remodeling complex. The WICH-5 ISWI chromatin remodeling complex regulates the transcription of various genes, has a role in RNA polymerase I transcription. Within the B-WICH complex has a role in RNA polymerase III transcription. Mediates the recruitment of the WICH-5 ISWI chromatin remodeling complex to replication foci during DNA replication. The protein is Tyrosine-protein kinase BAZ1B (Baz1b) of Mus musculus (Mouse).